A 545-amino-acid chain; its full sequence is ATP synthase subunit alpha (545 aa).

ATP is bound at residue 173–180 (GDRQTGKS).

This sequence belongs to the ATPase alpha/beta chains family. F-type ATPases have 2 components, CF(1) - the catalytic core - and CF(0) - the membrane proton channel. CF(1) has five subunits: alpha(3), beta(3), gamma(1), delta(1), epsilon(1). CF(0) has three main subunits: a(1), b(2) and c(9-12). The alpha and beta chains form an alternating ring which encloses part of the gamma chain. CF(1) is attached to CF(0) by a central stalk formed by the gamma and epsilon chains, while a peripheral stalk is formed by the delta and b chains.

It is found in the cell membrane. The catalysed reaction is ATP + H2O + 4 H(+)(in) = ADP + phosphate + 5 H(+)(out). In terms of biological role, produces ATP from ADP in the presence of a proton gradient across the membrane. The alpha chain is a regulatory subunit. This is ATP synthase subunit alpha from Pseudarthrobacter chlorophenolicus (strain ATCC 700700 / DSM 12829 / CIP 107037 / JCM 12360 / KCTC 9906 / NCIMB 13794 / A6) (Arthrobacter chlorophenolicus).